A 497-amino-acid chain; its full sequence is ADP-dependent glucokinase (497 aa).

An N-terminal signal peptide occupies residues 1–22; that stretch reads MALWRGSAYAGFLALAVGCVFL. The ADPK domain maps to 52–497; sequence SPEGRLAAAW…LFYSEVHPHY (446 aa). Mg(2+) is bound by residues Glu297, Glu328, and Asp481. Catalysis depends on Asp481, which acts as the Proton acceptor.

It belongs to the ADP-dependent glucokinase family. In terms of assembly, monomer. It depends on Mg(2+) as a cofactor.

Its subcellular location is the secreted. The enzyme catalyses D-glucose + ADP = D-glucose 6-phosphate + AMP + H(+). It functions in the pathway carbohydrate degradation; glycolysis. Functionally, catalyzes the phosphorylation of D-glucose to D-glucose 6-phosphate using ADP as the phosphate donor. GDP and CDP can replace ADP, but with reduced efficiency. This chain is ADP-dependent glucokinase (ADPGK), found in Homo sapiens (Human).